Consider the following 429-residue polypeptide: Saccharopine dehydrogenase-like oxidoreductase (429 aa).

N-acetylalanine is present on Ala2. Ser217 bears the Phosphoserine mark.

It belongs to the saccharopine dehydrogenase family.

This Bos taurus (Bovine) protein is Saccharopine dehydrogenase-like oxidoreductase (SCCPDH).